The sequence spans 401 residues: MDQSGMEIPVTLIIKAPNQKYSDQTISCFLNWTVGKLKTHLSNVYPSKPLTKDQRLVYSGRLLPDHLQLKDILRKQDEYHMVHLVCASRSPPSSPKSSTDGESHGALASSTNSNSDHSDSTTPSPSQESLSLVAGSSEGLRHRTLPQAQTDPAQSHQFPYVIQGNVDHQFPGQGVPPGFPMYPAFSPLQMLWWQQMYAQQYYMQYQAAVTAQATSSASSAQHAASSPLNLAHVPGEEPPPAPNLVAQENGPENVQMNAQGGPVLNEEDFNRDWLDWVYTFSRAAVLLSIVYFYSSFSRFIMVMGAMLLVYLHQAGWFPFRQEGGQQQAPNNVDANNEGQNANNLELEEMRLMDDGLEDESGEDAGEDASAAQRPGLMASAWSFITTFFTSLIPEGPPQVAN.

The region spanning 10–89 (VTLIIKAPNQ…HMVHLVCASR (80 aa)) is the Ubiquitin-like domain. The interval 87 to 137 (ASRSPPSSPKSSTDGESHGALASSTNSNSDHSDSTTPSPSQESLSLVAGSS) is disordered. Low complexity-rich tracts occupy residues 88–98 (SRSPPSSPKSS) and 109–126 (SSTN…PSPS). A helical transmembrane segment spans residues 299 to 319 (FIMVMGAMLLVYLHQAGWFPF).

Its subcellular location is the membrane. Functionally, could be involved in the unfolded protein response (UPR) pathway. The protein is Homocysteine-responsive endoplasmic reticulum-resident ubiquitin-like domain member 2 protein (Herpud2) of Rattus norvegicus (Rat).